The sequence spans 409 residues: Cobalt-precorrin-5B C(1)-methyltransferase (409 aa).

Belongs to the CbiD family.

It catalyses the reaction Co-precorrin-5B + S-adenosyl-L-methionine = Co-precorrin-6A + S-adenosyl-L-homocysteine. The protein operates within cofactor biosynthesis; adenosylcobalamin biosynthesis; cob(II)yrinate a,c-diamide from sirohydrochlorin (anaerobic route): step 6/10. Functionally, catalyzes the methylation of C-1 in cobalt-precorrin-5B to form cobalt-precorrin-6A. The sequence is that of Cobalt-precorrin-5B C(1)-methyltransferase from Methanopyrus kandleri (strain AV19 / DSM 6324 / JCM 9639 / NBRC 100938).